A 251-amino-acid polypeptide reads, in one-letter code: Probable transcriptional regulatory protein MAB_2888c (251 aa).

The interval 1–20 (MSGHSKWATTKHQKAVKDAR) is disordered.

It belongs to the TACO1 family.

The protein resides in the cytoplasm. The polypeptide is Probable transcriptional regulatory protein MAB_2888c (Mycobacteroides abscessus (strain ATCC 19977 / DSM 44196 / CCUG 20993 / CIP 104536 / JCM 13569 / NCTC 13031 / TMC 1543 / L948) (Mycobacterium abscessus)).